The chain runs to 373 residues: Glutamate 5-kinase (373 aa).

Lys12 is an ATP binding site. Substrate is bound by residues Ser52, Asp139, and Asn154. 216–222 contributes to the ATP binding site; the sequence is TGGMVTK. Residues 281–359 form the PUA domain; it reads RGSICVDDGA…QELNAVLGGN (79 aa).

It belongs to the glutamate 5-kinase family.

Its subcellular location is the cytoplasm. It catalyses the reaction L-glutamate + ATP = L-glutamyl 5-phosphate + ADP. The protein operates within amino-acid biosynthesis; L-proline biosynthesis; L-glutamate 5-semialdehyde from L-glutamate: step 1/2. In terms of biological role, catalyzes the transfer of a phosphate group to glutamate to form L-glutamate 5-phosphate. The chain is Glutamate 5-kinase from Dehalococcoides mccartyi (strain CBDB1).